A 131-amino-acid polypeptide reads, in one-letter code: Small ribosomal subunit protein uS8 (131 aa).

This sequence belongs to the universal ribosomal protein uS8 family. Part of the 30S ribosomal subunit. Contacts proteins S5 and S12.

Functionally, one of the primary rRNA binding proteins, it binds directly to 16S rRNA central domain where it helps coordinate assembly of the platform of the 30S subunit. The polypeptide is Small ribosomal subunit protein uS8 (Erythrobacter litoralis (strain HTCC2594)).